Reading from the N-terminus, the 281-residue chain is Aldo-keto reductase MMAR_1744 (281 aa).

Tyrosine 56 serves as the catalytic Proton donor. Positions 196, 234, 237, 245, 246, and 272 each coordinate NADPH.

The protein belongs to the aldo/keto reductase family.

This Mycobacterium marinum (strain ATCC BAA-535 / M) protein is Aldo-keto reductase MMAR_1744.